The sequence spans 445 residues: MTHPVVRFAPSPTGRLHVGNVRTALINWMFSRGQQGKFILRIDDTDLERSTAEHEEALKVDLTWLGLTWDDSFSQSHRFANYDAAADKLRALHLLYPCYETAEELDVKRKIAQTRGRPPVYDRAALSLTAQDRADLEAKGRKPHWRFKLSGERVEWNDLVRGPQSIDTASVSDPILIREDGSYLYTLPSVVDDIEAGITHVVRGEDHVTNSGAQIEIFMALGGKAPEMAHTPLLIGADGAALSKRIGSLSMGELRARGYEPMAICSHLAKLGTSDNIEARATLEQLCEEFSFSKIGRAPARFDDNDLNALNAALVHAMPFEAVRERLITLDARAASEPFWLAVRENCTFVADAISWVDMVYGSPAPLVAEEDREFISGAAMYLPEGELTTESWSAWTNALKAATGRKGRGLFMPLRKALTGAEHGPEMSAVLPLIGREKVLQRLS.

A 'HIGH' region motif is present at residues 10–20 (PSPTGRLHVGN). A 'KMSKS' region motif is present at residues 241-245 (ALSKR). Residue lysine 244 participates in ATP binding.

This sequence belongs to the class-I aminoacyl-tRNA synthetase family. Glutamate--tRNA ligase type 1 subfamily. In terms of assembly, monomer.

The protein localises to the cytoplasm. It carries out the reaction tRNA(Glu) + L-glutamate + ATP = L-glutamyl-tRNA(Glu) + AMP + diphosphate. Functionally, catalyzes the attachment of glutamate to tRNA(Glu) in a two-step reaction: glutamate is first activated by ATP to form Glu-AMP and then transferred to the acceptor end of tRNA(Glu). This is Glutamate--tRNA ligase 2 from Hyphomonas neptunium (strain ATCC 15444).